Here is a 785-residue protein sequence, read N- to C-terminus: Endonuclease MutS2 (785 aa).

An ATP-binding site is contributed by 335-342 (GPNTGGKT). A Smr domain is found at 710–785 (LDLRGERYED…GNGVTIVEFK (76 aa)).

It belongs to the DNA mismatch repair MutS family. MutS2 subfamily. As to quaternary structure, homodimer. Binds to stalled ribosomes, contacting rRNA.

In terms of biological role, endonuclease that is involved in the suppression of homologous recombination and thus may have a key role in the control of bacterial genetic diversity. Acts as a ribosome collision sensor, splitting the ribosome into its 2 subunits. Detects stalled/collided 70S ribosomes which it binds and splits by an ATP-hydrolysis driven conformational change. Acts upstream of the ribosome quality control system (RQC), a ribosome-associated complex that mediates the extraction of incompletely synthesized nascent chains from stalled ribosomes and their subsequent degradation. Probably generates substrates for RQC. This chain is Endonuclease MutS2, found in Listeria innocua serovar 6a (strain ATCC BAA-680 / CLIP 11262).